Reading from the N-terminus, the 143-residue chain is Transcriptional regulator MraZ (143 aa).

2 SpoVT-AbrB domains span residues 5–47 (EYNH…SMDE) and 76–119 (ATEC…SSDQ).

The protein belongs to the MraZ family. In terms of assembly, forms oligomers.

It is found in the cytoplasm. Its subcellular location is the nucleoid. The chain is Transcriptional regulator MraZ from Alkaliphilus metalliredigens (strain QYMF).